A 347-amino-acid polypeptide reads, in one-letter code: Tetraacyldisaccharide 4'-kinase (347 aa).

64-71 is an ATP binding site; sequence YVGGTGKT.

This sequence belongs to the LpxK family.

It catalyses the reaction a lipid A disaccharide + ATP = a lipid IVA + ADP + H(+). Its pathway is glycolipid biosynthesis; lipid IV(A) biosynthesis; lipid IV(A) from (3R)-3-hydroxytetradecanoyl-[acyl-carrier-protein] and UDP-N-acetyl-alpha-D-glucosamine: step 6/6. Functionally, transfers the gamma-phosphate of ATP to the 4'-position of a tetraacyldisaccharide 1-phosphate intermediate (termed DS-1-P) to form tetraacyldisaccharide 1,4'-bis-phosphate (lipid IVA). The sequence is that of Tetraacyldisaccharide 4'-kinase from Bordetella bronchiseptica (strain ATCC BAA-588 / NCTC 13252 / RB50) (Alcaligenes bronchisepticus).